Reading from the N-terminus, the 690-residue chain is Proprotein convertase subtilisin/kexin type 9 (690 aa).

Positions 1 to 28 (MGTVRSRRLWWPLPLLLLLLRGPAGARA) are cleaved as a signal peptide. Positions 29 to 150 (QEDDDGDYEE…IEEDSYVFAQ (122 aa)) are excised as a propeptide. The residue at position 36 (Y36) is a Sulfotyrosine. S45 carries the post-translational modification Phosphoserine. The Inhibitor I9 domain maps to 75–147 (TYVVVLKEET…VDYIEEDSYV (73 aa)). Residues 153-459 (PWNLERITPA…GWQLFCRTVW (307 aa)) enclose the Peptidase S8 domain. Catalysis depends on charge relay system residues D184 and H224. 2 cysteine pairs are disulfide-bonded: C221–C253 and C321–C356. The Charge relay system role is filled by S384. The segment at 448–690 (GAGWQLFCRT…HLAQASQELQ (243 aa)) is C-terminal domain. 3 disulfide bridges follow: C455/C525, C475/C524, and C484/C507. Residue N531 is glycosylated (N-linked (GlcNAc...) asparagine). 6 disulfide bridges follow: C532-C599, C550-C598, C560-C586, C606-C677, C624-C676, and C633-C652. Residue S686 is modified to Phosphoserine.

The protein belongs to the peptidase S8 family. Monomer. Can self-associate to form dimers and higher multimers which may have increased LDLR degrading activity. The precursor protein but not the mature protein may form multimers. Interacts with APOB, VLDLR, LRP8/APOER2 and BACE1. The full-length immature form (pro-PCSK9) interacts with SCNN1A, SCNN1B and SCNN1G. The pro-PCSK9 form (via C-terminal domain) interacts with LDLR. Interacts (via the C-terminal domain) with ANXA2 (via repeat Annexin 1); the interaction inhibits the degradation of LDLR. The cofactor is Ca(2+). In terms of processing, cleavage by furin and PCSK5 generates a truncated inactive protein that is unable to induce LDLR degradation. Undergoes autocatalytic cleavage in the endoplasmic reticulum to release the propeptide from the N-terminus and the cleavage of the propeptide is strictly required for its maturation and activation. The cleaved propeptide however remains associated with the catalytic domain through non-covalent interactions, preventing potential substrates from accessing its active site. As a result, it is secreted from cells as a propeptide-containing, enzymatically inactive protein. Post-translationally, phosphorylation protects the propeptide against proteolysis.

The protein localises to the cytoplasm. Its subcellular location is the secreted. It is found in the endosome. The protein resides in the lysosome. It localises to the cell surface. The protein localises to the endoplasmic reticulum. Its subcellular location is the golgi apparatus. Its proteolytic activity is autoinhibited by the non-covalent binding of the propeptide to the catalytic domain. Inhibited by EGTA. Functionally, crucial player in the regulation of plasma cholesterol homeostasis. Binds to low-density lipid receptor family members: low density lipoprotein receptor (LDLR), very low density lipoprotein receptor (VLDLR), apolipoprotein E receptor (LRP1/APOER) and apolipoprotein receptor 2 (LRP8/APOER2), and promotes their degradation in intracellular acidic compartments. Acts via a non-proteolytic mechanism to enhance the degradation of the hepatic LDLR through a clathrin LDLRAP1/ARH-mediated pathway. May prevent the recycling of LDLR from endosomes to the cell surface or direct it to lysosomes for degradation. Can induce ubiquitination of LDLR leading to its subsequent degradation. Inhibits intracellular degradation of APOB via the autophagosome/lysosome pathway in a LDLR-independent manner. Involved in the disposal of non-acetylated intermediates of BACE1 in the early secretory pathway. Inhibits epithelial Na(+) channel (ENaC)-mediated Na(+) absorption by reducing ENaC surface expression primarily by increasing its proteasomal degradation. Regulates neuronal apoptosis via modulation of LRP8/APOER2 levels and related anti-apoptotic signaling pathways. The chain is Proprotein convertase subtilisin/kexin type 9 (PCSK9) from Ateles geoffroyi (Black-handed spider monkey).